The following is a 1012-amino-acid chain: Tolloid-like protein 2 (1012 aa).

The signal sequence occupies residues 1-21 (MPLATTLGTLVLLLLLPLPRG). Residues 22 to 146 (AEVTGDHSNV…AKTFSARVRR (125 aa)) constitute a propeptide that is removed on maturation. Residues 83–135 (KPSIDKPGHDTGGLEETSARWPNDTASNASIQAPRKDGKDATTFLPNPGTSNT) are disordered. The span at 126-135 (FLPNPGTSNT) shows a compositional bias: polar residues. The region spanning 146 to 346 (RATTSRTERI…AQARKLYKCP (201 aa)) is the Peptidase M12A domain. An N-linked (GlcNAc...) asparagine glycan is attached at asparagine 168. Disulfide bonds link cysteine 189/cysteine 345, cysteine 209/cysteine 231, cysteine 211/cysteine 212, and cysteine 348/cysteine 374. Zn(2+) is bound at residue histidine 239. The active site involves glutamate 240. 2 residues coordinate Zn(2+): histidine 243 and histidine 249. CUB domains are found at residues 348–460 (CGET…YEAM) and 461–573 (CGGD…FFKE). 2 N-linked (GlcNAc...) asparagine glycosylation sites follow: asparagine 358 and asparagine 389. Cystine bridges form between cysteine 401/cysteine 423, cysteine 461/cysteine 487, cysteine 514/cysteine 536, cysteine 577/cysteine 589, cysteine 585/cysteine 598, cysteine 600/cysteine 613, cysteine 617/cysteine 643, cysteine 670/cysteine 692, cysteine 733/cysteine 744, cysteine 740/cysteine 753, cysteine 755/cysteine 768, and cysteine 773/cysteine 799. Positions 573 to 614 (EVDECSWPDHGGCEQRCVNTLGSYTCACDPGYELAADKKTCE) constitute an EGF-like 1; calcium-binding domain. The CUB 3 domain maps to 617 to 729 (CGGFITKLNG…RGFRAHFFSD (113 aa)). Asparagine 625 carries an N-linked (GlcNAc...) asparagine glycan. Residues 729 to 769 (DKDECAKDNGGCQQECVNTFGSYLCRCRNGYRLHENGHDCK) enclose the EGF-like 2; calcium-binding domain. CUB domains lie at 773–885 (CAYK…HSTE) and 886–1002 (CGGR…YTST). Asparagine 802 carries N-linked (GlcNAc...) asparagine glycosylation. Disulfide bonds link cysteine 826-cysteine 848, cysteine 886-cysteine 916, and cysteine 943-cysteine 965. An omega-N-methylarginine mark is found at arginine 960 and arginine 963.

The cofactor is Zn(2+).

It is found in the secreted. Functionally, protease which specifically processes pro-lysyl oxidase. Required for the embryonic development. Predominant protease, which in the development, influences dorsal-ventral patterning and skeletogenesis. The sequence is that of Tolloid-like protein 2 (Tll2) from Mus musculus (Mouse).